The primary structure comprises 363 residues: MNELLLNVVDPLHQWFLGLGDGGVLLWTVLKILLIAVPVIVTVAFYVVWERKLIGWMHVRHGPMYVGMGIFQAFADVFKLLFKEILQPSSSHKAMFIIAPLLTLAPAFAAWSVVPFDAKLVLSNANVGLLYLLAMTSLGVYGIILAGWASNSKYAFLGAMRSAAQVVSYEIAMGFALVGVMIASGSVNLSQIVFAQAGSSGFFDWFLIPLFPLFIVYWVSGVAETNRAPFDVVEGESEIVAGHMVEYSGGAFALFFLAEYANMILVSFLISIFFLGGWLSPIQGWVTADVSPWVNWLWTGGWPWLLMKVFFFASAYIWFRASFPRYRYDQIMRLGWKVFIPLTIVWIAVTALMVFYGVIQKGV.

The next 10 membrane-spanning stretches (helical) occupy residues V29–W49, G62–F82, F96–F116, V127–G147, A163–A183, F202–V222, I239–L257, I264–V286, T299–F319, and F339–I359.

This sequence belongs to the complex I subunit 1 family. NDH-1 is composed of 14 different subunits. Subunits NuoA, H, J, K, L, M, N constitute the membrane sector of the complex.

Its subcellular location is the cell inner membrane. The enzyme catalyses a quinone + NADH + 5 H(+)(in) = a quinol + NAD(+) + 4 H(+)(out). Its function is as follows. NDH-1 shuttles electrons from NADH, via FMN and iron-sulfur (Fe-S) centers, to quinones in the respiratory chain. The immediate electron acceptor for the enzyme in this species is believed to be ubiquinone. Couples the redox reaction to proton translocation (for every two electrons transferred, four hydrogen ions are translocated across the cytoplasmic membrane), and thus conserves the redox energy in a proton gradient. This subunit may bind ubiquinone. This Xanthomonas campestris pv. campestris (strain B100) protein is NADH-quinone oxidoreductase subunit H.